The chain runs to 155 residues: Aspartate carbamoyltransferase regulatory chain (155 aa).

Residues Cys-111, Cys-116, Cys-137, and Cys-140 each coordinate Zn(2+).

This sequence belongs to the PyrI family. In terms of assembly, contains catalytic and regulatory chains. It depends on Zn(2+) as a cofactor.

Functionally, involved in allosteric regulation of aspartate carbamoyltransferase. This Haloarcula marismortui (strain ATCC 43049 / DSM 3752 / JCM 8966 / VKM B-1809) (Halobacterium marismortui) protein is Aspartate carbamoyltransferase regulatory chain.